The primary structure comprises 287 residues: Eukaryotic translation initiation factor 3 subunit F (287 aa).

One can recognise an MPN domain in the interval 12-142; sequence VRVHPVVLFQ…IKAYVCVSLG (131 aa).

This sequence belongs to the eIF-3 subunit F family. As to quaternary structure, component of the eukaryotic translation initiation factor 3 (eIF-3) complex.

The protein resides in the cytoplasm. In terms of biological role, component of the eukaryotic translation initiation factor 3 (eIF-3) complex, which is involved in protein synthesis of a specialized repertoire of mRNAs and, together with other initiation factors, stimulates binding of mRNA and methionyl-tRNAi to the 40S ribosome. The eIF-3 complex specifically targets and initiates translation of a subset of mRNAs involved in cell proliferation. This Aedes aegypti (Yellowfever mosquito) protein is Eukaryotic translation initiation factor 3 subunit F.